The following is a 250-amino-acid chain: Small ribosomal subunit protein uS3 (250 aa).

In terms of domain architecture, KH type-2 spans 39–107 (VREFLTKNLK…PAQVSINEID (69 aa)). A disordered region spans residues 215 to 250 (MNPAPAEERPAKRGRGRGEGQERRGRRGDRAADKGE). Residues 220–250 (AEERPAKRGRGRGEGQERRGRRGDRAADKGE) show a composition bias toward basic and acidic residues.

The protein belongs to the universal ribosomal protein uS3 family. As to quaternary structure, part of the 30S ribosomal subunit. Forms a tight complex with proteins S10 and S14.

Functionally, binds the lower part of the 30S subunit head. Binds mRNA in the 70S ribosome, positioning it for translation. This is Small ribosomal subunit protein uS3 from Acinetobacter baumannii (strain AB0057).